We begin with the raw amino-acid sequence, 57 residues long: Protein new-glue 4 (57 aa).

An N-terminal signal peptide occupies residues methionine 1–cysteine 16.

It localises to the secreted. This is Protein new-glue 4 (ng4) from Drosophila melanogaster (Fruit fly).